A 556-amino-acid chain; its full sequence is CDP-diacylglycerol--glycerol-3-phosphate 3-phosphatidyltransferase, mitochondrial (556 aa).

The N-terminal 28 residues, 1-28 (MAAAAAAAAGPVFWRRLLGLLPGRPGLA), are a transit peptide targeting the mitochondrion. Residue Ser-49 is modified to Phosphoserine. Residue 124–131 (ASLYLGIG) coordinates ATP. 2 consecutive PLD phosphodiesterase domains span residues 215–241 (TIGL…SDSY) and 419–457 (FGAK…LQEY). Active-site residues include His-220, Lys-222, and Asp-227.

It belongs to the CDP-alcohol phosphatidyltransferase class-II family.

The protein localises to the mitochondrion. It carries out the reaction a CDP-1,2-diacyl-sn-glycerol + sn-glycerol 3-phosphate = a 1,2-diacyl-sn-glycero-3-phospho-(1'-sn-glycero-3'-phosphate) + CMP + H(+). The protein operates within phospholipid metabolism; phosphatidylglycerol biosynthesis; phosphatidylglycerol from CDP-diacylglycerol: step 1/2. Activated by calcium and magnesium and inhibited by other bivalent cations. Its function is as follows. Functions in the biosynthesis of the anionic phospholipids phosphatidylglycerol and cardiolipin. The protein is CDP-diacylglycerol--glycerol-3-phosphate 3-phosphatidyltransferase, mitochondrial (PGS1) of Bos taurus (Bovine).